The following is a 430-amino-acid chain: UPF0597 protein BDI_1130 (430 aa).

Belongs to the UPF0597 family.

The protein is UPF0597 protein BDI_1130 of Parabacteroides distasonis (strain ATCC 8503 / DSM 20701 / CIP 104284 / JCM 5825 / NCTC 11152).